A 1040-amino-acid polypeptide reads, in one-letter code: Kinesin-like protein KIN-14H (1040 aa).

Residues 54–176 (DLRRYEAARW…CVLALKSYRE (123 aa)) form the Calponin-homology (CH) domain. The tract at residues 208–242 (SEVPVDAVTNSPSSTPSSEQPLLDQSDSNTKNDGT) is disordered. Polar residues predominate over residues 215–242 (VTNSPSSTPSSEQPLLDQSDSNTKNDGT). Residues 434-754 (SIRVYCRVRP…LKFAERVATV (321 aa)) form the Kinesin motor domain. ATP is bound at residue 517 to 524 (GQTGSGKT). A coiled-coil region spans residues 761-796 (VNKDTSEVKELKEQIASLKLALARKESGADQTQLQR). The segment covering 809-818 (LGVSSSFSKS) has biased composition (low complexity). 3 disordered regions span residues 809–871 (LGVS…GKEE), 887–926 (EDEITRSSKPENRAHTQLEKRTSSLKREATRGVDKNKCNS), and 969–1040 (MPRP…QNPK). Over residues 840 to 851 (IEGQSDSASSLD) the composition is skewed to polar residues. A compositionally biased stretch (basic and acidic residues) spans 887–923 (EDEITRSSKPENRAHTQLEKRTSSLKREATRGVDKNK). Positions 1018–1031 (SPGQTSSRHNNSTV) are enriched in polar residues.

The protein belongs to the TRAFAC class myosin-kinesin ATPase superfamily. Kinesin family. KIN-14 subfamily.

The polypeptide is Kinesin-like protein KIN-14H (Arabidopsis thaliana (Mouse-ear cress)).